A 440-amino-acid polypeptide reads, in one-letter code: MENIQKLIARYPLVEDLVALKETTWFNPGTTSLAQGLPYVGLTEQDVNAAHDRLARFAPYLAKAFPQTAAAGGMIESDVVAIPAMQKRLEKEYGQTIDGEMLLKKDSHLAISGSIKARGGIYEVLTHAEKLALEAGLLTTDDDYSVLLSPEFKQFFSQHSIAVGSTGNLGLSIGIMSACIGFKVTVHMSADARAWKKAKLRSHGVTVVEYEDDYGVAVEQGRKAAQSDPNCFFIDDENSRTLFLGYAVAGQRLKAQFAQQGRVVDASHPLFVYLPCGVGGGPGGVAFGLKLAFGDNVHCFFAEPTHSPCMLLGVYTGLHDAISVQDIGIDNLTAADGLAVGRASGFVGRAMERLLDGLYTLDDQTMYDMLGWLAQEEGIRLEPSALAGMAGPQRICAATEYQQRHGFSQTQLGNATHLVWATGGGMVPEDEMEQYLAKGR.

N6-(pyridoxal phosphate)lysine is present on Lys116.

This sequence belongs to the serine/threonine dehydratase family. DsdA subfamily. Monomer. Requires pyridoxal 5'-phosphate as cofactor.

It catalyses the reaction D-serine = pyruvate + NH4(+). This is D-serine dehydratase from Salmonella paratyphi A (strain ATCC 9150 / SARB42).